Reading from the N-terminus, the 90-residue chain is Probable Fe(2+)-trafficking protein (90 aa).

The protein belongs to the Fe(2+)-trafficking protein family.

In terms of biological role, could be a mediator in iron transactions between iron acquisition and iron-requiring processes, such as synthesis and/or repair of Fe-S clusters in biosynthetic enzymes. The polypeptide is Probable Fe(2+)-trafficking protein (Pseudoalteromonas translucida (strain TAC 125)).